Reading from the N-terminus, the 705-residue chain is Calpain-1 catalytic subunit (705 aa).

The Calpain catalytic domain maps to 48-347 (LFRDPQFPAG…FSRLEICNLT (300 aa)). Catalysis depends on residues cysteine 108, histidine 265, and asparagine 289. The domain III stretch occupies residues 348–517 (PDALTKDELS…KQSDTAELDE (170 aa)). The linker stretch occupies residues 518–533 (EISADLADEEEITEDD). Residues 530–565 (TEDDIEDGFKNMFQQLAGEDMEISVFELKTILNRVI) form the EF-hand 1 domain. The tract at residues 534-704 (IEDGFKNMFQ…LAEWLLLTMC (171 aa)) is domain IV. Ca(2+) is bound by residues aspartate 549, glutamate 551, glutamate 556, aspartate 589, aspartate 591, serine 593, arginine 595, glutamate 600, aspartate 619, aspartate 621, serine 623, threonine 625, and glutamate 630. 2 consecutive EF-hand domains span residues 606–641 (NKIRSWLTIFRQYDLDKSGTMSSYEMRMALESAGFK) and 671–705 (VKLETMFRFFHSMDRDGTGTAVMNLAEWLLLTMCG).

This sequence belongs to the peptidase C2 family. As to quaternary structure, heterodimer of large (catalytic) and a small (regulatory) subunit. Requires Ca(2+) as cofactor. The N-terminus is blocked. In terms of tissue distribution, ubiquitously expressed.

It is found in the cytoplasm. The protein resides in the cell membrane. It catalyses the reaction Broad endopeptidase specificity.. With respect to regulation, activated by micromolar concentrations of calcium and inhibited by calpastatin. In terms of biological role, calcium-regulated non-lysosomal thiol-protease which catalyze limited proteolysis of substrates involved in cytoskeletal remodeling and signal transduction. The chain is Calpain-1 catalytic subunit from Gallus gallus (Chicken).